The sequence spans 537 residues: Synaptotagmin-2 (537 aa).

At 1-2 the chain is on the cytoplasmic side; the sequence is MG. Residues 3–23 traverse the membrane as a helical segment; it reads IISTILGVIGFGFGTTIGIVI. Residues 24–537 are Lumenal-facing; sequence GYYLFIYFQS…QIELQWRNSS (514 aa). In terms of domain architecture, SMP-LTD spans 67-249; the sequence is DFDRIDWLNK…WPKTLNVQIM (183 aa). A phospholipid binding region spans residues 227–505; the sequence is QEIIKDQVAN…TLGYVVINLG (279 aa). C2 domains are found at residues 240–362 and 402–517; these read WPKT…LMTL and DPNA…NDKY. Residues Asp276, Asp282, Asp332, and Glu334 each contribute to the Ca(2+) site.

This sequence belongs to the synaptotagmin family. Ca(2+) serves as cofactor.

The protein resides in the golgi apparatus membrane. Its function is as follows. May play an important role in regulating an unconventional protein trafficking from the cytosol to the extracellular matrix. The protein is Synaptotagmin-2 (SYT2) of Arabidopsis thaliana (Mouse-ear cress).